Consider the following 78-residue polypeptide: Translational regulator CsrA (78 aa).

This sequence belongs to the CsrA/RsmA family. In terms of assembly, homodimer; the beta-strands of each monomer intercalate to form a hydrophobic core, while the alpha-helices form wings that extend away from the core.

Its subcellular location is the cytoplasm. Functionally, a translational regulator that binds mRNA to regulate translation initiation and/or mRNA stability. Usually binds in the 5'-UTR at or near the Shine-Dalgarno sequence preventing ribosome-binding, thus repressing translation. Its main target seems to be the major flagellin gene, while its function is anatagonized by FliW. This Natranaerobius thermophilus (strain ATCC BAA-1301 / DSM 18059 / JW/NM-WN-LF) protein is Translational regulator CsrA.